Reading from the N-terminus, the 652-residue chain is DNA ligase (652 aa).

NAD(+) is bound by residues 29–33 (DSEYD), 78–79 (SL), and Glu107. Lys109 functions as the N6-AMP-lysine intermediate in the catalytic mechanism. Residues Arg130, Glu164, Lys278, and Lys302 each contribute to the NAD(+) site. Residues Cys395, Cys398, Cys413, and Cys418 each coordinate Zn(2+). The 76-residue stretch at 577–652 (DRQAELFGLT…IEDEDWLLNL (76 aa)) folds into the BRCT domain.

Belongs to the NAD-dependent DNA ligase family. LigA subfamily. It depends on Mg(2+) as a cofactor. Requires Mn(2+) as cofactor.

The catalysed reaction is NAD(+) + (deoxyribonucleotide)n-3'-hydroxyl + 5'-phospho-(deoxyribonucleotide)m = (deoxyribonucleotide)n+m + AMP + beta-nicotinamide D-nucleotide.. Its function is as follows. DNA ligase that catalyzes the formation of phosphodiester linkages between 5'-phosphoryl and 3'-hydroxyl groups in double-stranded DNA using NAD as a coenzyme and as the energy source for the reaction. It is essential for DNA replication and repair of damaged DNA. In Streptococcus equi subsp. zooepidemicus (strain MGCS10565), this protein is DNA ligase.